A 59-amino-acid polypeptide reads, in one-letter code: UPF0434 protein Sbal_1685 (59 aa).

This sequence belongs to the UPF0434 family.

The protein is UPF0434 protein Sbal_1685 of Shewanella baltica (strain OS155 / ATCC BAA-1091).